A 451-amino-acid polypeptide reads, in one-letter code: MVAVAILAAGRGTRMKSNLPKVLHPLGGRSLVERVLESCQLINPEKRLIIIGYQAEAVKQTLEPYEGIEFVEQKEQLGTGHAIIQLIPYLQNFQGDLLVLNGDVPLLRSESLHHLIEIHKTNQNSATILTAHLPHPKGYGRVFCDGNNLVTQIVEERDCTDAQRQNKRVNGGIYCFNWPQLAEVLPKLKPDNDQQEYYLTDVVKYLNSVMAVDVEDYLEISGINDRKQLATAYDILQNRIKDYWMRAGVTLIDPDSITIDDTVELQPDVIIEPQTHLRGQTVIGSGCRIGPGSLIENSKIGENVTVLYAVITDSEVESGCRIGPYAHLRGEAKIKASCRIGNFVEIKKSTVGEKSNVAHLSYLGDATLGDKVNVGAGTITANYDGVKKHPTVIGNNTKTGANSVLVAPVTIGNDVTIAAGSVINKDVPDDSLAIARERQKNISGWRMKTDD.

Positions 1–226 (MVAVAILAAG…YLEISGINDR (226 aa)) are pyrophosphorylase. Residues 7 to 10 (LAAG), K21, Q73, and 78 to 79 (GT) contribute to the UDP-N-acetyl-alpha-D-glucosamine site. D103 provides a ligand contact to Mg(2+). The UDP-N-acetyl-alpha-D-glucosamine site is built by G140, E155, N170, and N224. N224 contributes to the Mg(2+) binding site. The interval 227–247 (KQLATAYDILQNRIKDYWMRA) is linker. Residues 248-451 (GVTLIDPDSI…ISGWRMKTDD (204 aa)) are N-acetyltransferase. Positions 329 and 347 each coordinate UDP-N-acetyl-alpha-D-glucosamine. H359 (proton acceptor) is an active-site residue. UDP-N-acetyl-alpha-D-glucosamine contacts are provided by Y362 and N373. Acetyl-CoA contacts are provided by residues A376, 382–383 (NY), A419, and R436.

The protein in the N-terminal section; belongs to the N-acetylglucosamine-1-phosphate uridyltransferase family. It in the C-terminal section; belongs to the transferase hexapeptide repeat family. Homotrimer. Mg(2+) is required as a cofactor.

The protein localises to the cytoplasm. The catalysed reaction is alpha-D-glucosamine 1-phosphate + acetyl-CoA = N-acetyl-alpha-D-glucosamine 1-phosphate + CoA + H(+). It catalyses the reaction N-acetyl-alpha-D-glucosamine 1-phosphate + UTP + H(+) = UDP-N-acetyl-alpha-D-glucosamine + diphosphate. Its pathway is nucleotide-sugar biosynthesis; UDP-N-acetyl-alpha-D-glucosamine biosynthesis; N-acetyl-alpha-D-glucosamine 1-phosphate from alpha-D-glucosamine 6-phosphate (route II): step 2/2. It participates in nucleotide-sugar biosynthesis; UDP-N-acetyl-alpha-D-glucosamine biosynthesis; UDP-N-acetyl-alpha-D-glucosamine from N-acetyl-alpha-D-glucosamine 1-phosphate: step 1/1. It functions in the pathway bacterial outer membrane biogenesis; LPS lipid A biosynthesis. Catalyzes the last two sequential reactions in the de novo biosynthetic pathway for UDP-N-acetylglucosamine (UDP-GlcNAc). The C-terminal domain catalyzes the transfer of acetyl group from acetyl coenzyme A to glucosamine-1-phosphate (GlcN-1-P) to produce N-acetylglucosamine-1-phosphate (GlcNAc-1-P), which is converted into UDP-GlcNAc by the transfer of uridine 5-monophosphate (from uridine 5-triphosphate), a reaction catalyzed by the N-terminal domain. This chain is Bifunctional protein GlmU, found in Gloeothece citriformis (strain PCC 7424) (Cyanothece sp. (strain PCC 7424)).